Consider the following 106-residue polypeptide: Small ribosomal subunit protein uS10 (106 aa).

The protein belongs to the universal ribosomal protein uS10 family. In terms of assembly, part of the 30S ribosomal subunit.

Involved in the binding of tRNA to the ribosomes. The polypeptide is Small ribosomal subunit protein uS10 (Prochlorococcus marinus (strain MIT 9303)).